Consider the following 468-residue polypeptide: Ribulose bisphosphate carboxylase large chain (468 aa).

At Lys7 the chain carries N6,N6,N6-trimethyllysine. Substrate is bound by residues Asn116 and Thr166. Residue Lys168 is the Proton acceptor of the active site. Lys170 is a substrate binding site. Residues Lys194, Asp196, and Glu197 each coordinate Mg(2+). Lys194 is modified (N6-carboxylysine). The active-site Proton acceptor is the His287. Substrate is bound by residues Arg288, His320, and Ser372.

It belongs to the RuBisCO large chain family. Type I subfamily. Heterohexadecamer of 8 large chains and 8 small chains. The cofactor is Mg(2+).

It localises to the plastid. The protein resides in the chloroplast. It catalyses the reaction 2 (2R)-3-phosphoglycerate + 2 H(+) = D-ribulose 1,5-bisphosphate + CO2 + H2O. It carries out the reaction D-ribulose 1,5-bisphosphate + O2 = 2-phosphoglycolate + (2R)-3-phosphoglycerate + 2 H(+). In terms of biological role, ruBisCO catalyzes two reactions: the carboxylation of D-ribulose 1,5-bisphosphate, the primary event in carbon dioxide fixation, as well as the oxidative fragmentation of the pentose substrate in the photorespiration process. Both reactions occur simultaneously and in competition at the same active site. The sequence is that of Ribulose bisphosphate carboxylase large chain from Couroupita guianensis (Cannonball tree).